We begin with the raw amino-acid sequence, 184 residues long: Exosome complex protein LRP1 (184 aa).

The disordered stretch occupies residues 157 to 184 (DSTDHIRKASSKKSKRLDKVGKKKGGKK). The span at 164–184 (KASSKKSKRLDKVGKKKGGKK) shows a compositional bias: basic residues.

Belongs to the C1D family. Associates with nuclear form of the RNA exosome complex. Interacts with RRP4, RRP6, RRP45 and RRP46.

It is found in the nucleus. Functionally, required for exosome-dependent processing of pre-rRNA and small nucleolar RNA (snRNA) precursors. Involved in processing of 35S pre-rRNA at the A0, A1 and A2 sites. Required for activity of RRP6 in 7S pre-rRNA processing. Also has a role in 3'-processing of U4 and U5 small nuclear RNAs (snRNAs). Acts as a mRNA export factor. Mediates mRNA degradation upon UV irradiation. Maintains genome integrity where it is involved in both non-homologous end joining (NHEJ) and homologous recombination pathway repair of double strand DNA breaks. During NHEJ, required for joining 3'-overhanging ends. Also involved in telomere length regulation and maintenance. The sequence is that of Exosome complex protein LRP1 (LRP1) from Saccharomyces cerevisiae (strain ATCC 204508 / S288c) (Baker's yeast).